The chain runs to 430 residues: GTPase Obg (430 aa).

The Obg domain maps to 1-158 (MFVDQVKISL…LDVSLELKLL (158 aa)). A disordered region spans residues 118-145 (KGGRGGRGNSRFATPRNPAPDFSEKGEP). The OBG-type G domain maps to 159–329 (ADVGLVGFPS…LLYAIADKLE (171 aa)). GTP contacts are provided by residues 165-172 (GFPSVGKS), 190-194 (FTTIK), 212-215 (DLPG), 282-285 (NKMD), and 310-312 (STI). Mg(2+) contacts are provided by Ser-172 and Thr-192. The OCT domain occupies 352-430 (KHTPSQDKFT…ILGGEFEFVE (79 aa)).

The protein belongs to the TRAFAC class OBG-HflX-like GTPase superfamily. OBG GTPase family. Monomer. The cofactor is Mg(2+).

Its subcellular location is the cytoplasm. Its function is as follows. An essential GTPase which binds GTP, GDP and possibly (p)ppGpp with moderate affinity, with high nucleotide exchange rates and a fairly low GTP hydrolysis rate. Plays a role in control of the cell cycle, stress response, ribosome biogenesis and in those bacteria that undergo differentiation, in morphogenesis control. This chain is GTPase Obg, found in Staphylococcus aureus (strain Mu3 / ATCC 700698).